The sequence spans 187 residues: Elongation factor P (187 aa).

This sequence belongs to the elongation factor P family.

It localises to the cytoplasm. It participates in protein biosynthesis; polypeptide chain elongation. Involved in peptide bond synthesis. Stimulates efficient translation and peptide-bond synthesis on native or reconstituted 70S ribosomes in vitro. Probably functions indirectly by altering the affinity of the ribosome for aminoacyl-tRNA, thus increasing their reactivity as acceptors for peptidyl transferase. This Parasynechococcus marenigrum (strain WH8102) protein is Elongation factor P.